The primary structure comprises 154 residues: Thioredoxin-like protein CXXS2 (154 aa).

The region spanning 23–148 is the Thioredoxin domain; that stretch reads RRNKTQARSQ…LQKKTAAAAN (126 aa). Position 31 is a phosphoserine (serine 31).

It belongs to the thioredoxin family. In terms of tissue distribution, ubiquitous.

Its subcellular location is the cytoplasm. Functionally, possesses low disulfide reductase activity, but efficient protein disulfide isomerase activity. Does not possess deglutathionylation activity. The protein is Thioredoxin-like protein CXXS2 (CXXS2) of Arabidopsis thaliana (Mouse-ear cress).